Here is a 211-residue protein sequence, read N- to C-terminus: FMN-dependent NADH:quinone oxidoreductase (211 aa).

Residues 17–19 and 99–102 each bind FMN; these read SYS and MWNF.

Belongs to the azoreductase type 1 family. As to quaternary structure, homodimer. Requires FMN as cofactor.

The enzyme catalyses 2 a quinone + NADH + H(+) = 2 a 1,4-benzosemiquinone + NAD(+). It catalyses the reaction N,N-dimethyl-1,4-phenylenediamine + anthranilate + 2 NAD(+) = 2-(4-dimethylaminophenyl)diazenylbenzoate + 2 NADH + 2 H(+). Functionally, quinone reductase that provides resistance to thiol-specific stress caused by electrophilic quinones. Also exhibits azoreductase activity. Catalyzes the reductive cleavage of the azo bond in aromatic azo compounds to the corresponding amines. In Exiguobacterium sp. (strain ATCC BAA-1283 / AT1b), this protein is FMN-dependent NADH:quinone oxidoreductase.